The chain runs to 821 residues: Nitrogen permease regulator 3 (821 aa).

The signal sequence occupies residues 1-21 (MSLNLPNPSILGILLVVSTHS). Disordered stretches follow at residues 29 to 64 (YPPD…ELDI), 116 to 194 (RQTS…GIPP), 246 to 283 (GSWK…DYET), and 654 to 694 (ENEG…PEDI). The span at 116–142 (RQTSQERNKIYGHKQSDSHIDPDEIKS) shows a compositional bias: basic and acidic residues. A compositionally biased stretch (low complexity) spans 170 to 192 (KKTISSISDSQKSSTSKASTSGI). A compositionally biased stretch (basic residues) spans 249–266 (KSKHSHRPKSGKSSKGRS). Positions 669–688 (ADPNISNKLNAGTDNTSKTE) are enriched in polar residues.

Belongs to the NPR3 family.

Mediates inactivation of the TORC1 complex in response to amino acid starvation. Required for meiotic nuclear division. This is Nitrogen permease regulator 3 (NPR3) from Debaryomyces hansenii (strain ATCC 36239 / CBS 767 / BCRC 21394 / JCM 1990 / NBRC 0083 / IGC 2968) (Yeast).